Reading from the N-terminus, the 337-residue chain is GTPase Obg (337 aa).

The region spanning 1–161 is the Obg domain; that stretch reads MNLTDNAVIF…FKIKLDFVFL (161 aa). The OBG-type G domain occupies 162 to 333; sequence ADVGLFGYSN…LINKILLFLE (172 aa). GTP contacts are provided by residues 168-175, 193-197, 214-217, 282-285, and 314-316; these read GYSNTGRS, FTTLF, DIPS, NKTD, and SLN. Ser175 and Thr195 together coordinate Mg(2+).

The protein belongs to the TRAFAC class OBG-HflX-like GTPase superfamily. OBG GTPase family. In terms of assembly, monomer. Requires Mg(2+) as cofactor.

It is found in the cytoplasm. In terms of biological role, an essential GTPase which binds GTP, GDP and possibly (p)ppGpp with moderate affinity, with high nucleotide exchange rates and a fairly low GTP hydrolysis rate. Plays a role in control of the cell cycle, stress response, ribosome biogenesis and in those bacteria that undergo differentiation, in morphogenesis control. The protein is GTPase Obg of Wigglesworthia glossinidia brevipalpis.